We begin with the raw amino-acid sequence, 413 residues long: Protein trichome birefringence-like 9 (413 aa).

Residues 22–42 traverse the membrane as a helical; Signal-anchor for type II membrane protein segment; sequence LFVSLFLLSLLIFSTVVVDVM. Positions 141–143 match the GDS motif motif; sequence GDS. The DCXHWCLPGXXDXWN motif motif lies at 384–398; that stretch reads DCSHWCLPGVPDTWN.

The protein belongs to the PC-esterase family. TBL subfamily.

It is found in the membrane. Its function is as follows. May act as a bridging protein that binds pectin and other cell wall polysaccharides. Probably involved in maintaining esterification of pectins. May be involved in the specific O-acetylation of cell wall polymers. In Arabidopsis thaliana (Mouse-ear cress), this protein is Protein trichome birefringence-like 9 (TBL9).